The sequence spans 646 residues: FLETDNEGNGILRRRDIKNALYGFDIPLTPREFEKLWASYDTEGKGHITYQEFLQKLGVNYSPAVHRPCAEDYFNFMGHFTKPQQLQEEMKELQQSTEKAVAARDKLVDCYQDISKAFTKIDKSKTNYISICKMQKVLEECGCSLTEGELTNLLNSWGVSRHDNSINYLDFLRAVENSKSTGAQPKEKEESMPINFATLNPQEVVRKIQEVVESSQLALSTAFSALDKEDTGFVKSTEFGQVLKDFCHKLTDNQYHYFLRKLRIHLTPYINWKYFLQNFSCFLEETAEEWAEKMPKGPPPTSPKAMASRDILARLHKAVTSHYHAITQEFENFDTMKTNTISREEFRAVCNRNVQILTDEQFDRLWNEMPVNAKGRLKYPDFLSRFSSERAATPTATGDSAAAQRGSSVPDVSEGIRSALSLPNQELRPGSKPQSHPCTAASTTAIPGTPPLQNCDPIESRLRKRIQGCWRQLLKECKEKDVARQGDISASEFLALVEKFNLDISKEECQQLIIKYDLKNNGKFAYCDFIQSCVLLLKAKESSLMQRMKIQNAHKMKDSGAETSSFYSALLRIQPKIVHCWRPMRRTFKSYDEAGTGLLSVADFRTVLRQYSINLSEEEFFHILEYYDKTLSSNISYNDFLRAFLQ.

EF-hand domains lie at 1 to 27 (FLETDNEGNGILRRRDIKNALYGFDIP), 28 to 63 (LTPREFEKLWASYDTEGKGHITYQEFLQKLGVNYSP), 109 to 144 (DCYQDISKAFTKIDKSKTNYISICKMQKVLEECGCS), 214 to 249 (SSQLALSTAFSALDKEDTGFVKSTEFGQVLKDFCHK), 321 to 356 (SHYHAITQEFENFDTMKTNTISREEFRAVCNRNVQI), and 357 to 392 (LTDEQFDRLWNEMPVNAKGRLKYPDFLSRFSSERAA). At threonine 29 the chain carries Phosphothreonine. The interval 390–452 (RAATPTATGD…TTAIPGTPPL (63 aa)) is disordered. Over residues 432 to 446 (KPQSHPCTAASTTAI) the composition is skewed to polar residues. Serine 435 carries the phosphoserine modification. Residues threonine 439 and threonine 449 each carry the phosphothreonine modification. Residues 448–646 (GTPPLQNCDP…YNDFLRAFLQ (199 aa)) are interaction with PARK7. 4 EF-hand domains span residues 468-503 (GCWRQLLKECKEKDVARQGDISASEFLALVEKFNLD), 504-539 (ISKEECQQLIIKYDLKNNGKFAYCDFIQSCVLLLKA), 579-614 (HCWRPMRRTFKSYDEAGTGLLSVADFRTVLRQYSIN), and 615-646 (LSEEEFFHILEYYDKTLSSNISYNDFLRAFLQ). Residues 552–646 (NAHKMKDSGA…YNDFLRAFLQ (95 aa)) are interaction with AR.

As to quaternary structure, microtubule inner protein component of sperm flagellar doublet microtubules. Binds PARK7. Part of a ternary complex containing PARK7, EFCAB6/DJBP and AR.

It localises to the nucleus. The protein resides in the cytoplasm. Its subcellular location is the cytoskeleton. It is found in the flagellum axoneme. Functionally, negatively regulates the androgen receptor by recruiting histone deacetylase complex, and protein DJ-1 antagonizes this inhibition by abrogation of this complex. Microtubule inner protein (MIP) part of the dynein-decorated doublet microtubules (DMTs) in cilia axoneme, which is required for motile cilia beating. This chain is EF-hand calcium-binding domain-containing protein 6 (EFCAB6), found in Macaca fascicularis (Crab-eating macaque).